Consider the following 617-residue polypeptide: Urocanate reductase (617 aa).

At Thr-70 the chain carries FMN phosphoryl threonine. The FAD site is built by Ala-124, Glu-143, Asn-151, Thr-152, Gly-156, Gly-157, and Asp-387. The active-site Proton donor is Arg-446. 3 residues coordinate FAD: His-553, Glu-582, and Leu-598.

The protein belongs to the FAD-dependent oxidoreductase 2 family. FRD/SDH subfamily. FAD is required as a cofactor. Requires FMN as cofactor.

The enzyme catalyses dihydrourocanate + A = urocanate + AH2. Catalyzes the two-electron reduction of urocanate to dihydrourocanate (also named imidazole propionate or deamino-histidine). Dihydrourocanate is present at higher concentrations in subjects with type 2 diabetes, and directly impairs glucose tolerance and insulin signaling at the level of insulin receptor substrate (IRS) through activation of p38 gamma (MAPK12)-p62-mTORC1. Therefore, the UrdA enzyme from the gut bacteria L.fermentum strain NBRC 3956 may contribute to the pathogenesis of type 2 diabetes by producing the microbial metabolite dihydrourocanate. In Limosilactobacillus fermentum (strain NBRC 3956 / LMG 18251) (Lactobacillus fermentum), this protein is Urocanate reductase.